The primary structure comprises 662 residues: Probable dolichyl-phosphate-mannose--protein mannosyltransferase 7 (662 aa).

Over 1 to 26 the chain is Lumenal; that stretch reads MKDLRLQGPYRKYIPYNIFQQCGIGH. The helical transmembrane segment at 27–47 threads the bilayer; sequence LKTLDYIFAFLIVITNFTLIW. Residues 48–159 lie on the Cytoplasmic side of the membrane; it reads KSHSSSFWNR…GTIISFDSLE (112 aa). The chain crosses the membrane as a helical span at residues 160–180; the sequence is WCLFSVVIYSFISISIAKLGT. Topologically, residues 181–195 are lumenal; that stretch reads TNWFANVITLSISLG. Residues 196–216 traverse the membrane as a helical segment; it reads LAISSKFIGIVTWAFVILSFV. Topologically, residues 217-235 are cytoplasmic; the sequence is RQFDRLISDVKVTTIQIIK. Residues 236–256 form a helical membrane-spanning segment; the sequence is FVILCLLFVLIIPGSIFIISY. The Lumenal segment spans residues 257 to 482; the sequence is SNLLSNFKTD…MEYPVIPRTT (226 aa). One can recognise an MIR 1 domain in the interval 289-344; that stretch reads PSRLYYGSTITLRHLDSMVGYLASHDISYPSDVDEQLVALSFEEFAADNEWLIEHP. N347 carries N-linked (GlcNAc...) asparagine glycosylation. 2 MIR domains span residues 359–418 and 432–488; these read LIPV…VLLI and DKYI…IDSV. The helical transmembrane segment at 483–503 threads the bilayer; it reads FLIDSVQLPVDFQVPMIEYYI. The Cytoplasmic portion of the chain corresponds to 504 to 565; that stretch reads GKISSSAEFN…KWPITLDTDS (62 aa). Residues 566–586 form a helical membrane-spanning segment; that stretch reads PVWFNFAWYGSLLSMIIFMCV. Residues 587 to 617 lie on the Lumenal side of the membrane; it reads QCKRMISWNPWTTAEPSFSIKWEVYNEFGWE. Residues 618–638 traverse the membrane as a helical segment; it reads CIVGWFLHFYIFTMSPHFNLG. Topologically, residues 639–662 are cytoplasmic; it reads KKLYFQSFFFSVLCLLESLDCLAK.

The protein belongs to the glycosyltransferase 39 family.

The protein resides in the endoplasmic reticulum membrane. It carries out the reaction a di-trans,poly-cis-dolichyl beta-D-mannosyl phosphate + L-seryl-[protein] = 3-O-(alpha-D-mannosyl)-L-seryl-[protein] + a di-trans,poly-cis-dolichyl phosphate + H(+). The catalysed reaction is a di-trans,poly-cis-dolichyl beta-D-mannosyl phosphate + L-threonyl-[protein] = 3-O-(alpha-D-mannosyl)-L-threonyl-[protein] + a di-trans,poly-cis-dolichyl phosphate + H(+). The protein operates within protein modification; protein glycosylation. Functionally, probable protein O-mannosyltransferase involved in O-glycosylation which is essential for cell wall rigidity. Transfers mannose from Dol-P-mannose to Ser or Thr residues on proteins. This Saccharomyces cerevisiae (strain ATCC 204508 / S288c) (Baker's yeast) protein is Probable dolichyl-phosphate-mannose--protein mannosyltransferase 7.